The sequence spans 504 residues: Patatin-like phospholipase domain-containing protein 2 (504 aa).

At M1–W8 the chain is on the cytoplasmic side. The chain crosses the membrane as a helical span at residues N9–L29. The region spanning I10–K179 is the PNPLA domain. A GXGXXG motif is present at residues G14–G19. Topologically, residues R30–H42 are extracellular. N-linked (GlcNAc...) asparagine glycosylation is present at N39. The helical transmembrane segment at I43–G63 threads the bilayer. Positions G45–G49 match the GXSXG motif. S47 serves as the catalytic Nucleophile. The Cytoplasmic segment spans residues E64–E137. K92 is covalently cross-linked (Glycyl lysine isopeptide (Lys-Gly) (interchain with G-Cter in ubiquitin)). Residues L138–S158 form a helical membrane-spanning segment. Residues L159–R329 are Extracellular-facing. D166 acts as the Proton acceptor in catalysis. The short motif at D166–G168 is the DGA/G element. Residues L330–I350 form a helical membrane-spanning segment. Residues R351–L504 lie on the Cytoplasmic side of the membrane. Position 372 is a phosphoserine; in vitro (S372). A Phosphoserine; by PKA and FAM20C modification is found at S404. Phosphoserine is present on S428. Positions A463–A492 are disordered.

As to quaternary structure, interacts with ABHD5; this association stimulates PNPLA2 triglyceride hydrolase activity. Interacts with SERPINF1; this interaction stimulates the phospholipase A2 activity of PNPLA2. Despite a colocalization in lipid droplets, it probably does not interact with PLIN. Interacts with PLIN5; prevents interaction with ABHD5. Interacts with FAF2. Phosphorylation at Ser-404 by PKA is increased during fasting and moderate intensity exercise, and moderately increases lipolytic activity. Phosphorylation at Ser-404 is increased upon beta-adrenergic stimulation. In terms of processing, ubiquitinated by PEX2 in response to reactive oxygen species (ROS), leading to its degradation. Ubiquitination is stimulated by LDAH. In terms of tissue distribution, highest expression in adipose tissue. Also detected in heart, skeletal muscle, and portions of the gastrointestinal tract. Detected in normal retina and retinoblastoma cells. Detected in retinal pigment epithelium and, at lower intensity, in the inner segments of photoreceptors and in the ganglion cell layer of the neural retina (at protein level).

It localises to the lipid droplet. The protein localises to the cell membrane. It is found in the cytoplasm. It carries out the reaction a triacylglycerol + H2O = a diacylglycerol + a fatty acid + H(+). The enzyme catalyses a triacylglycerol + H2O = a 1,2-diacylglycerol + a fatty acid + H(+). It catalyses the reaction a triacylglycerol + H2O = a 1,3-diacylglycerol + a fatty acid + H(+). The catalysed reaction is a triacyl-sn-glycerol + H2O = a 1,3-diacyl-sn-glycerol + a fatty acid + H(+). It carries out the reaction a triacyl-sn-glycerol + H2O = a 2,3-diacyl-sn-glycerol + a fatty acid + H(+). The enzyme catalyses a 1-acylglycerol + a 1,3-diacylglycerol = a triacylglycerol + glycerol. It catalyses the reaction a 1-acylglycerol + a 1,2-diacylglycerol = a triacylglycerol + glycerol. The catalysed reaction is 2 a 1-acylglycerol = a 1,2-diacylglycerol + glycerol. It carries out the reaction a triacylglycerol + all-trans-retinol = an all-trans-retinyl ester + a diacylglycerol. The enzyme catalyses 1,2-di-(9Z-octadecenoyl)-glycerol + (9Z)-octadecenoate + H(+) = 1,2,3-tri-(9Z-octadecenoyl)-glycerol + H2O. It catalyses the reaction 1,2,3-tri-(9Z-octadecenoyl)-glycerol + H2O = 1,3-di-(9Z-octadecenoyl)-glycerol + (9Z)-octadecenoate + H(+). The catalysed reaction is 1-(9Z-octadecenoyl)-glycerol + 1,3-di-(9Z-octadecenoyl)-glycerol = 1,2,3-tri-(9Z-octadecenoyl)-glycerol + glycerol. It carries out the reaction 1-(9Z-octadecenoyl)-glycerol + 1,2-di-(9Z-octadecenoyl)-glycerol = 1,2,3-tri-(9Z-octadecenoyl)-glycerol + glycerol. The enzyme catalyses 2 1-(9Z-octadecenoyl)-glycerol = 1,2-di-(9Z-octadecenoyl)-glycerol + glycerol. It catalyses the reaction 1,2,3-tri-(9Z-octadecenoyl)-glycerol + all-trans-retinol = all-trans-retinyl 9Z-octadecenoate + di-(9Z)-octadecenoylglycerol. The catalysed reaction is 1,2,3-tri-(9Z)-hexadecenoylglycerol + H2O = 1,3-di-(9Z)-hexadecenoylglycerol + (9Z)-hexadecenoate + H(+). It carries out the reaction 1,2,3-tri-(9Z,12Z)-octadecadienoylglycerol + H2O = 1,3-di-(9Z,12Z)-octadecadienoylglycerol + (9Z,12Z)-octadecadienoate + H(+). The enzyme catalyses 1,2,3-tri-(9Z,12Z,15Z)-octadecatrienoylglycerol + H2O = 1,3-di-(9Z,12Z,15Z)-octadecatrienoylglycerol + (9Z,12Z,15Z)-octadecatrienoate + H(+). It catalyses the reaction 1,3-di-(9Z)-octadecenoyl-2-hexadecanoylglycerol + H2O = 1,3-di-(9Z-octadecenoyl)-glycerol + hexadecanoate + H(+). The catalysed reaction is 1,2-di-(9Z)-octadecenoyl-3-hexadecanoyl-sn-glycerol + H2O = 1-(9Z)-octadecenoyl-3-hexadecanoyl-sn-glycerol + (9Z)-octadecenoate + H(+). It carries out the reaction 1-hexadecanoyl-2,3-di-(9Z)-octadecenoyl-sn-glycerol + H2O = 1-hexadecanoyl-3-(9Z)-octadecenoyl-sn-glycerol + (9Z)-octadecenoate + H(+). The enzyme catalyses 1,2,3-tri-(9Z-octadecenoyl)-glycerol + H2O = 2,3-di-(9Z)-octadecenoyl-sn-glycerol + (9Z)-octadecenoate + H(+). It catalyses the reaction 1,2,3-tri-(9Z)-hexadecenoylglycerol + H2O = 2,3-di-(9Z)-hexadecenoyl-sn-glycerol + (9Z)-hexadecenoate + H(+). The catalysed reaction is 1,2,3-tri-(9Z,12Z)-octadecadienoylglycerol + H2O = 2,3-di-(9Z,12Z)-octadecadienoyl-sn-glycerol + (9Z,12Z)-octadecadienoate + H(+). It carries out the reaction 1,2,3-tri-(9Z,12Z,15Z)-octadecatrienoylglycerol + H2O = 2,3-di-(9Z,12Z,15Z)-octadecatrienoyl-sn-glycerol + (9Z,12Z,15Z)-octadecatrienoate + H(+). The enzyme catalyses 1,3-di-(9Z)-octadecenoyl-2-hexadecanoylglycerol + H2O = 2-hexadecanoyl-3-(9Z)-octadecenoyl-sn-glycerol + (9Z)-octadecenoate + H(+). It catalyses the reaction 1-hexadecanoyl-2,3-di-(9Z)-octadecenoyl-sn-glycerol + H2O = 2,3-di-(9Z)-octadecenoyl-sn-glycerol + hexadecanoate + H(+). The catalysed reaction is 1,2-di-(9Z)-octadecenoyl-3-hexadecanoyl-sn-glycerol + H2O = 2-(9Z-octadecenoyl)-3-hexadecanoyl-sn-glycerol + (9Z)-octadecenoate + H(+). It carries out the reaction a 1,2-diacyl-sn-glycero-3-phosphocholine + H2O = a 1-acyl-sn-glycero-3-phosphocholine + a fatty acid + H(+). The enzyme catalyses 1,2,3-tri-(9Z-octadecenoyl)-glycerol + 9-hydroxy-octadecanoate = 9-(9Z-octadecenoyloxy)-octadecanoate + 2,3-di-(9Z)-octadecenoyl-sn-glycerol. It catalyses the reaction 1-hexadecanoyl-2,3-di-(9Z)-octadecenoyl-sn-glycerol + 9-hydroxy-octadecanoate = 9-hexadecanoyloxy-octadecanoate + 2,3-di-(9Z)-octadecenoyl-sn-glycerol. The catalysed reaction is 1,2,3-tri-(10Z)-heptadecenoylglycerol + 9-hydroxy-octadecanoate = 2,3-di-(10Z-heptadecenoyl)-sn-glycerol + 9-(10Z-heptadecenoyloxy)-octadecanoate. It carries out the reaction 1,2,3-tri-(9Z,12Z)-octadecadienoylglycerol + 9-hydroxy-octadecanoate = 2,3-di-(9Z,12Z)-octadecadienoyl-sn-glycerol + 9-(9Z,12Z-octadecadienoyloxy)-octadecanoate. The enzyme catalyses 1,2,3-tri-(9Z)-hexadecenoylglycerol + 9-hydroxy-octadecanoate = 2,3-di-(9Z)-hexadecenoyl-sn-glycerol + 9-(9Z-hexadecenoyloxy)-octadecanoate. It catalyses the reaction 9-hydroxy-octadecanoate + 1,2-di-(9Z-octadecenoyl)-sn-glycerol = 9-(9Z-octadecenoyloxy)-octadecanoate + 2-(9Z-octadecenoyl)-glycerol. The catalysed reaction is 1-hexadecanoyl-2,3-di-(9Z)-octadecenoyl-sn-glycerol + 9-hydroxy-octadecanoate = 1-hexadecanoyl-3-(9Z)-octadecenoyl-sn-glycerol + 9-(9Z-octadecenoyloxy)-octadecanoate. It participates in glycerolipid metabolism; triacylglycerol degradation. The triglyceride lipase activity is inhibited by BEL ((E)-6-(bromomethylene)-3-(1-naphthalenyl)-2H-tetrahydropyran-2-one), a suicide substrate inhibitor. No differences in the acylglycerol transacylase was detected in the presence or absence of ATP. Its function is as follows. Catalyzes the initial step in triglyceride hydrolysis in adipocyte and non-adipocyte lipid droplets. Exhibits a strong preference for the hydrolysis of long-chain fatty acid esters at the sn-2 position of the glycerol backbone and acts coordinately with LIPE/HLS and DGAT2 within the lipolytic cascade. Also possesses acylglycerol transacylase and phospholipase A2 activities. Transfers fatty acid from triglyceride to retinol, hydrolyzes retinylesters, and generates 1,3-diacylglycerol from triglycerides. Regulates adiposome size and may be involved in the degradation of adiposomes. Catalyzes the formation of an ester bond between hydroxy fatty acids and fatty acids derived from triglycerides or diglycerides to generate fatty acid esters of hydroxy fatty acids (FAHFAs) in adipocytes. Acts antagonistically with LDAH in regulation of cellular lipid stores. Inhibits LDAH-stimulated lipid droplet fusion. May play an important role in energy homeostasis. May play a role in the response of the organism to starvation, enhancing hydrolysis of triglycerides and providing free fatty acids to other tissues to be oxidized in situations of energy depletion. The protein is Patatin-like phospholipase domain-containing protein 2 of Homo sapiens (Human).